A 267-amino-acid chain; its full sequence is tRNA pseudouridine synthase A (267 aa).

Asp-51 functions as the Nucleophile in the catalytic mechanism. Tyr-109 lines the substrate pocket.

It belongs to the tRNA pseudouridine synthase TruA family. Homodimer.

It catalyses the reaction uridine(38/39/40) in tRNA = pseudouridine(38/39/40) in tRNA. In terms of biological role, formation of pseudouridine at positions 38, 39 and 40 in the anticodon stem and loop of transfer RNAs. This is tRNA pseudouridine synthase A from Staphylococcus saprophyticus subsp. saprophyticus (strain ATCC 15305 / DSM 20229 / NCIMB 8711 / NCTC 7292 / S-41).